A 532-amino-acid chain; its full sequence is Flavin-containing monooxygenase 3 (532 aa).

Residues 9–13 (GAGVS), Glu-32, 40–41 (LW), and 61–62 (NS) each bind FAD. NADP(+) contacts are provided by residues 60-61 (TN) and 195-198 (SGCD). Position 401 is a phosphoserine (Ser-401). The chain crosses the membrane as a helical span at residues 512–532 (CHLVKLFVLPVLFIAVFLALI).

This sequence belongs to the FMO family. FAD serves as cofactor.

The protein localises to the microsome membrane. It is found in the endoplasmic reticulum membrane. The enzyme catalyses trimethylamine + NADPH + O2 = trimethylamine N-oxide + NADP(+) + H2O. It carries out the reaction N,N-dimethylaniline + NADPH + O2 + H(+) = N,N-dimethylaniline N-oxide + NADP(+) + H2O. It catalyses the reaction hypotaurine + NADPH + O2 + H(+) = taurine + NADP(+) + H2O. The catalysed reaction is (S)-nicotine + NADPH + O2 = trans-(S)-nicotine N(1')-oxide + NADP(+) + H2O. The enzyme catalyses albendazole + NADPH + O2 + H(+) = albendazole S-oxide + NADP(+) + H2O. Its function is as follows. Essential hepatic enzyme that catalyzes the oxygenation of a wide variety of nitrogen- and sulfur-containing compounds including drugs as well as dietary compounds. Plays an important role in the metabolism of trimethylamine (TMA), via the production of trimethylamine N-oxide (TMAO) metabolite. TMA is generated by the action of gut microbiota using dietary precursors such as choline, choline containing compounds, betaine or L-carnitine. By regulating TMAO concentration, FMO3 directly impacts both platelet responsiveness and rate of thrombus formation. The sequence is that of Flavin-containing monooxygenase 3 (FMO3) from Canis lupus familiaris (Dog).